Consider the following 637-residue polypeptide: Chaperone protein HtpG (637 aa).

The tract at residues 1–347 (MTQSVHAETH…SNDLPLNVSR (347 aa)) is a; substrate-binding. The interval 348–564 (EILQDNKVTV…NHGMSTQMIK (217 aa)) is b. The c stretch occupies residues 565–637 (LMRAAGQPVP…SRINRLLLQA (73 aa)).

It belongs to the heat shock protein 90 family. In terms of assembly, homodimer.

Its subcellular location is the cytoplasm. Its function is as follows. Molecular chaperone. Has ATPase activity. This chain is Chaperone protein HtpG, found in Aeromonas salmonicida (strain A449).